A 757-amino-acid chain; its full sequence is MDVNPTLLFLKVPAQNAISTTFPYTGDPPYSHGTGTGYTMDTVNRTHQYSEKGRWTTNTETGAPQLNPIDGPLPEDNEPSGYAQTDCVLEVMAFLEESHPGIFENSCIETMEVVQQTRVDKLTQGRQTYDWTLNRNQPAATALANTIEVFRSNGLTANESGRLIDFLKDVMESMNKEEMGITTHFQRKRRVRDNMTKKMITQRTMGKKKQRLNKRSYLIRALTLNTMTKDAERGKLKRRAIATPGMQIRGFVYFVETLARSICEKLEQSGLPVGGNEKKAKLANVVRKMMTNSQDTELSFTITGDNTKWNENQNPRMFLAMITYMTRNQPEWFRNVLSIAPIMFSNKMARLGKGYMFESKSMKLRTQIPAEMLASIDLKYFNDSTRKKIEKIRPLLIEGTASLSPGMMMGMFNMLSTVLGVSILNLGQKRYTKTTYWWDGLQSSDDFALIVNAPNHEGIQAGVDRFYRTCKLLGINMSKKKSYINRTGTFEFTSFFYRYGFVANFSMELPSFGVSGINESADMSIGVTVIKNNMINNDLGPATAQMALQLFIKDYRYTYRCHRGDTQIQTRRSFEIKKLWEQTRSKAGLLVSDGGPNLYNIRNLHIPEVCLKWELMDEDYQGRLCNPLNPFVSHKEIESMNNAVMMPAHGPAKNMEYDAVATTHSWIPKRNRSILNTSQRGVLGDEQMYQRCCNLFEKFFPSSSYRRPVGISSMVEAMVSRARIDARIDFESGRIKKEEFTEIMKICSTIEELRRQK.

The segment at 53 to 82 (GRWTTNTETGAPQLNPIDGPLPEDNEPSGY) is disordered. Residues 55–64 (WTTNTETGAP) are compositionally biased toward polar residues. 2 short sequence motifs (nuclear localization signal) span residues 187–195 (RKRRVRDNM) and 203–216 (RTMG…NKRS). Residues 249 to 256 (RGFVYFVE) are promoter-binding site. The RdRp catalytic domain maps to 286 to 483 (VRKMMTNSQD…GINMSKKKSY (198 aa)).

It belongs to the influenza viruses polymerase PB1 family. Influenza RNA polymerase is composed of three subunits: PB1, PB2 and PA. Interacts (via N-terminus) with PA (via C-terminus). Interacts (via C-terminus) with PB2 (via N-terminus); this interaction is essential for transcription initiation. Phosphorylated by host PRKCA.

Its subcellular location is the host nucleus. The protein localises to the host cytoplasm. The enzyme catalyses RNA(n) + a ribonucleoside 5'-triphosphate = RNA(n+1) + diphosphate. Its function is as follows. RNA-dependent RNA polymerase which is responsible for replication and transcription of virus RNA segments. The transcription of viral mRNAs occurs by a unique mechanism called cap-snatching. 5' methylated caps of cellular mRNAs are cleaved after 10-13 nucleotides by PA. In turn, these short capped RNAs are used as primers by PB1 for transcription of viral mRNAs. During virus replication, PB1 initiates RNA synthesis and copy vRNA into complementary RNA (cRNA) which in turn serves as a template for the production of more vRNAs. This is RNA-directed RNA polymerase catalytic subunit from Aves (whales).